Consider the following 281-residue polypeptide: Plasmanylethanolamine desaturase (281 aa).

The Cytoplasmic segment spans residues 1-28 (MKTQEIEKKVRQQDAQVLAQGYSPAIRA). Residues 29–45 (MEIAAIVSFVSLEVALV) traverse the membrane as a helical segment. The Periplasmic portion of the chain corresponds to 46–58 (YRLWGTPYAGTWL). A helical transmembrane segment spans residues 59–75 (LLSAVLLGYLAADFVSG). Residues 76–123 (FVHWMGDTWGSTEMPVLGKALIRPFREHHVDEKAITRHDFVETNGNNC) lie on the Cytoplasmic side of the membrane. The helical transmembrane segment at 124–138 (LISLPVAIIALCLPM) threads the bilayer. Topologically, residues 139–142 (SGPG) are periplasmic. The chain crosses the membrane as a helical span at residues 143 to 159 (WVFCASFLGAMIFWVMA). Residues 160–281 (TNQFHKWSHM…VQEKPASTRP (122 aa)) lie on the Cytoplasmic side of the membrane. The Histidine box-1 signature appears at 164-168 (HKWSH). Positions 191–195 (HRIHH) match the Histidine box-2 motif.

This sequence belongs to the fatty acid desaturase CarF family. As to quaternary structure, interacts with CarR.

Its subcellular location is the cell inner membrane. It carries out the reaction a 1-(1,2-saturated alkyl)-2-acyl-sn-glycero-3-phosphoethanolamine + 2 Fe(II)-[cytochrome b5] + O2 + 2 H(+) = a 1-O-(1Z-alkenyl)-2-acyl-sn-glycero-3-phosphoethanolamine + 2 Fe(III)-[cytochrome b5] + 2 H2O. It catalyses the reaction 1-O-(13-methyltetradecyl)-2-(13-methyltetradecanoyl)-sn-glycero-3-phosphoethanolamine + 2 Fe(II)-[cytochrome b5] + O2 + 2 H(+) = 1-O-(1Z-13-methyltetradecenyl)-2-(13-methyltetradecanoyl)-sn-glycero-3-phosphoethanolamine + 2 Fe(III)-[cytochrome b5] + 2 H2O. In terms of biological role, plasmanylethanolamine desaturase involved in plasmalogen biogenesis in the membrane, required for light-induced carotenogenesis. Plasmalogens are glycerophospholipids with a hydrocarbon chain linked by a vinyl ether bond at the glycerol sn-1 position, and are involved in antioxidative and signaling mechanisms, most precisely in sensing photooxidative stress through singlet oxygen. Participates in the light-dependent inactivation of the antisigma factor CarR. Mediates signaling by singlet oxygen, generated via photoexcited protoporphyrin IX. The chain is Plasmanylethanolamine desaturase from Myxococcus xanthus.